The chain runs to 147 residues: Large ribosomal subunit protein uL16 (147 aa).

This sequence belongs to the universal ribosomal protein uL16 family. In terms of assembly, part of the 50S ribosomal subunit.

Functionally, binds 23S rRNA and is also seen to make contacts with the A and possibly P site tRNAs. This is Large ribosomal subunit protein uL16 from Lactobacillus delbrueckii subsp. bulgaricus (strain ATCC 11842 / DSM 20081 / BCRC 10696 / JCM 1002 / NBRC 13953 / NCIMB 11778 / NCTC 12712 / WDCM 00102 / Lb 14).